A 37-amino-acid chain; its full sequence is Antifungal protein S (37 aa).

It belongs to the thaumatin family.

In terms of biological role, has antifungal activity. Inhibits the growth of Trichoderma viridae and Candida albicans. This Hordeum vulgare (Barley) protein is Antifungal protein S.